We begin with the raw amino-acid sequence, 163 residues long: Protein-export protein SecB (163 aa).

The protein belongs to the SecB family. Homotetramer, a dimer of dimers. One homotetramer interacts with 1 SecA dimer.

The protein resides in the cytoplasm. Its function is as follows. One of the proteins required for the normal export of preproteins out of the cell cytoplasm. It is a molecular chaperone that binds to a subset of precursor proteins, maintaining them in a translocation-competent state. It also specifically binds to its receptor SecA. This is Protein-export protein SecB from Burkholderia ambifaria (strain MC40-6).